We begin with the raw amino-acid sequence, 62 residues long: MKLNDKELSKIVGGNRWGDTVLSAASGAGTGIKACKSFGPWGMAICGVGGAAIGGYFGYTHN.

Residues 1 to 14 constitute a propeptide that is removed on maturation; that stretch reads MKLNDKELSKIVGG.

This sequence belongs to the bacteriocin class IIB family. This bacteriocin depends upon the complementation of two peptides for activity: LafA and LafX. Associated with a 180 kDa bacteriocin complex.

Its function is as follows. Heat stable bacteriocin active against Enterococcus faecalis and other Lactobacilli. This is Bacteriocin lactacin-F subunit LafX (lafX) from Lactobacillus johnsonii (strain CNCM I-12250 / La1 / NCC 533).